The primary structure comprises 575 residues: Dihydroxy-acid dehydratase (575 aa).

Residues 1-25 are disordered; it reads MPTTDSARAADIKQPDIKPRSRDVT. Over residues 8–25 the composition is skewed to basic and acidic residues; that stretch reads RAADIKQPDIKPRSRDVT. Cys-64 contributes to the [2Fe-2S] cluster binding site. Asp-96 lines the Mg(2+) pocket. A [2Fe-2S] cluster-binding site is contributed by Cys-137. Positions 138 and 139 each coordinate Mg(2+). Lys-139 bears the N6-carboxylysine mark. Cys-214 is a [2Fe-2S] cluster binding site. Residue Glu-465 coordinates Mg(2+). Ser-491 functions as the Proton acceptor in the catalytic mechanism.

The protein belongs to the IlvD/Edd family. As to quaternary structure, homodimer. [2Fe-2S] cluster serves as cofactor. Requires Mg(2+) as cofactor.

It carries out the reaction (2R)-2,3-dihydroxy-3-methylbutanoate = 3-methyl-2-oxobutanoate + H2O. The catalysed reaction is (2R,3R)-2,3-dihydroxy-3-methylpentanoate = (S)-3-methyl-2-oxopentanoate + H2O. It participates in amino-acid biosynthesis; L-isoleucine biosynthesis; L-isoleucine from 2-oxobutanoate: step 3/4. It functions in the pathway amino-acid biosynthesis; L-valine biosynthesis; L-valine from pyruvate: step 3/4. Functions in the biosynthesis of branched-chain amino acids. Catalyzes the dehydration of (2R,3R)-2,3-dihydroxy-3-methylpentanoate (2,3-dihydroxy-3-methylvalerate) into 2-oxo-3-methylpentanoate (2-oxo-3-methylvalerate) and of (2R)-2,3-dihydroxy-3-methylbutanoate (2,3-dihydroxyisovalerate) into 2-oxo-3-methylbutanoate (2-oxoisovalerate), the penultimate precursor to L-isoleucine and L-valine, respectively. This Mycobacterium avium (strain 104) protein is Dihydroxy-acid dehydratase.